Consider the following 473-residue polypeptide: MAP kinase-activated protein kinase 5 (473 aa).

In terms of domain architecture, Protein kinase spans 22-304 (INWTQKLGAG…IEGVLDHPWL (283 aa)). ATP contacts are provided by residues 28 to 36 (LGAGISGPV) and Lys51. Position 115 is a phosphoserine; by PKA (Ser115). The active-site Proton acceptor is the Asp148. Thr182 is modified (phosphothreonine; by MAPK11, MAPK14, MAPK4, MAPK6 and PKA). 2 positions are modified to phosphoserine: Ser212 and Ser354. Residues 409–440 (ENEDEKLNEVMQEAWKYNRECKLLRDALQSFS) adopt a coiled-coil conformation.

The protein belongs to the protein kinase superfamily. CAMK Ser/Thr protein kinase family. As to quaternary structure, interacts with SQSTM1. Interacts with ERK3/MAPK6 and ERK4/MAPK4 (via FRIEDE motif); the interaction is direct. Interacts with YWHAE; the interaction prevents phosphorylation of HSP27/HSPB1 leading to disrupt F-actin polymerization. Post-translationally, phosphorylated on Thr-182 ERK3/MAPK6 or ERK4/MAPK4; which is the regulatory phosphorylation site and is located on the T-loop/loop 12, leading to activation. Phosphorylation at Thr-182 by p38-alpha/MAPK14, p38-beta/MAPK11 is subject to debate. Phosphorylated at Ser-115 by PKA/PRKACA, leading to localization to the cytoplasm. Autophosphorylated. Expressed ubiquitously.

It localises to the cytoplasm. Its subcellular location is the nucleus. It catalyses the reaction L-seryl-[protein] + ATP = O-phospho-L-seryl-[protein] + ADP + H(+). The enzyme catalyses L-threonyl-[protein] + ATP = O-phospho-L-threonyl-[protein] + ADP + H(+). With respect to regulation, activated following phosphorylation at Thr-182 by p38-alpha/MAPK14, p38-beta/MAPK11, ERK2/MAPK1, ERK3/MAPK6, and ERK4/MAPK4. Activated by stress-related extracellular stimuli; such as H(2)O(2), arsenite, anisomycin TNF alpha and also PMA and the calcium ionophore A23187; but to a lesser extent. In vitro, activated by SQSTM1. Inhibited by diterpenoid alkaloid noroxoaconitine. Functionally, tumor suppressor serine/threonine-protein kinase involved in mTORC1 signaling and post-transcriptional regulation. Phosphorylates FOXO3, ERK3/MAPK6, ERK4/MAPK4, HSP27/HSPB1, p53/TP53 and RHEB. Acts as a tumor suppressor by mediating Ras-induced senescence and phosphorylating p53/TP53. Involved in post-transcriptional regulation of MYC by mediating phosphorylation of FOXO3: phosphorylation of FOXO3 leads to promote nuclear localization of FOXO3, enabling expression of miR-34b and miR-34c, 2 post-transcriptional regulators of MYC that bind to the 3'UTR of MYC transcript and prevent MYC translation. Acts as a negative regulator of mTORC1 signaling by mediating phosphorylation and inhibition of RHEB. Part of the atypical MAPK signaling via its interaction with ERK3/MAPK6 or ERK4/MAPK4: the precise role of the complex formed with ERK3/MAPK6 or ERK4/MAPK4 is still unclear, but the complex follows a complex set of phosphorylation events: upon interaction with atypical MAPK (ERK3/MAPK6 or ERK4/MAPK4), ERK3/MAPK6 (or ERK4/MAPK4) is phosphorylated and then mediates phosphorylation and activation of MAPKAPK5, which in turn phosphorylates ERK3/MAPK6 (or ERK4/MAPK4). Mediates phosphorylation of HSP27/HSPB1 in response to PKA/PRKACA stimulation, inducing F-actin rearrangement. This chain is MAP kinase-activated protein kinase 5 (Mapkapk5), found in Mus musculus (Mouse).